We begin with the raw amino-acid sequence, 76 residues long: Conotoxin VnMEKL-021 (76 aa).

Positions 1–19 (MQKLTILLLVAAVLMSTQA) are cleaved as a signal peptide. A propeptide spanning residues 20-37 (LIKGGGEKRPKEKIKFLS) is cleaved from the precursor. 3 disulfides stabilise this stretch: Cys51–Cys65, Cys58–Cys69, and Cys64–Cys73.

Belongs to the conotoxin O2 superfamily. Expressed by the venom duct.

The protein localises to the secreted. The protein is Conotoxin VnMEKL-021 of Conus ventricosus (Mediterranean cone).